We begin with the raw amino-acid sequence, 713 residues long: U3 small nucleolar RNA-associated protein 8 (713 aa).

The residue at position 95 (T95) is a Phosphothreonine. A phosphoserine mark is found at S148 and S150.

In terms of assembly, interacts with snoRNA U3. Interacts with MPP10 and UTP25. Component of the ribosomal small subunit (SSU) processome composed of at least 40 protein subunits and snoRNA U3. In the absence of snoRNA3, forms a complex with other t-UTPs. This complex can associate with pre-18S ribosomal RNAs.

Its subcellular location is the nucleus. It is found in the nucleolus. Involved in nucleolar processing of pre-18S ribosomal RNA. Also has a role in nuclear tRNA export. It acts between the steps of tRNA maturation/aminoacylation and its subsequent translocation out of the nucleus. Required for optimal pre-ribosomal RNA transcription by RNA polymerase I together with a subset of U3 proteins required for transcription (t-UTPs). The polypeptide is U3 small nucleolar RNA-associated protein 8 (UTP8) (Saccharomyces cerevisiae (strain ATCC 204508 / S288c) (Baker's yeast)).